A 314-amino-acid chain; its full sequence is tRNA-cytidine(32) 2-sulfurtransferase (314 aa).

A PP-loop motif motif is present at residues 58–63; it reads SGGKDS. 3 residues coordinate [4Fe-4S] cluster: Cys133, Cys136, and Cys224.

This sequence belongs to the TtcA family. As to quaternary structure, homodimer. Requires Mg(2+) as cofactor. [4Fe-4S] cluster serves as cofactor.

It is found in the cytoplasm. The catalysed reaction is cytidine(32) in tRNA + S-sulfanyl-L-cysteinyl-[cysteine desulfurase] + AH2 + ATP = 2-thiocytidine(32) in tRNA + L-cysteinyl-[cysteine desulfurase] + A + AMP + diphosphate + H(+). It functions in the pathway tRNA modification. Its function is as follows. Catalyzes the ATP-dependent 2-thiolation of cytidine in position 32 of tRNA, to form 2-thiocytidine (s(2)C32). The sulfur atoms are provided by the cysteine/cysteine desulfurase (IscS) system. This is tRNA-cytidine(32) 2-sulfurtransferase from Polaromonas naphthalenivorans (strain CJ2).